Here is a 223-residue protein sequence, read N- to C-terminus: Type III pantothenate kinase (223 aa).

Position 17 to 24 (17 to 24 (DIGNTRIH)) interacts with ATP. Residues tyrosine 81 and 85–88 (GIDR) each bind substrate. The Proton acceptor role is filled by aspartate 87. Aspartate 102 is a K(+) binding site. Serine 105 lines the ATP pocket. Threonine 157 lines the substrate pocket.

The protein belongs to the type III pantothenate kinase family. Homodimer. Requires NH4(+) as cofactor. K(+) serves as cofactor.

It localises to the cytoplasm. The enzyme catalyses (R)-pantothenate + ATP = (R)-4'-phosphopantothenate + ADP + H(+). Its pathway is cofactor biosynthesis; coenzyme A biosynthesis; CoA from (R)-pantothenate: step 1/5. With respect to regulation, not regulated by feedback inhibition by CoA and its thioesters as described for many other pantothenate kinases. Not inhibited by N-pentylpantothenamide (N5-Pan), and this compound cannot act as a substrate either. Catalyzes the phosphorylation of pantothenate (Pan), the first step in CoA biosynthesis. Can also utilize CTP or GTP instead of ATP as a phosphoryl donor, albeit to a lesser extent. The sequence is that of Type III pantothenate kinase (coaX) from Helicobacter pylori (strain ATCC 700392 / 26695) (Campylobacter pylori).